A 436-amino-acid polypeptide reads, in one-letter code: Trigger factor (436 aa).

In terms of domain architecture, PPIase FKBP-type spans Asp-161–Pro-246.

Belongs to the FKBP-type PPIase family. Tig subfamily.

The protein resides in the cytoplasm. It carries out the reaction [protein]-peptidylproline (omega=180) = [protein]-peptidylproline (omega=0). Functionally, involved in protein export. Acts as a chaperone by maintaining the newly synthesized protein in an open conformation. Functions as a peptidyl-prolyl cis-trans isomerase. The chain is Trigger factor from Tolumonas auensis (strain DSM 9187 / NBRC 110442 / TA 4).